The sequence spans 590 residues: Negative elongation factor D (590 aa).

Residues 15-43 are disordered; that stretch reads FGSAAEWGDEADGGQQEDDYGEGEDDAEV. Over residues 21–43 the composition is skewed to acidic residues; that stretch reads WGDEADGGQQEDDYGEGEDDAEV.

This sequence belongs to the NELF-D family. As to quaternary structure, the NELF complex is composed of NELFA, NELFB, NELFCD and NELFE; NELFA and NELFCD form a stable subcomplex that binds primarily through NELFCD to the N-terminus of NELFB. Binds RNA which may help to stabilize the NELF complex on nucleic acid. In vitro, the NELFA:NELFCD subcomplex binds to ssDNA and ssRNA in a sequence- and structure-dependent manner. Interacts with ARAF1. Interacts with PCF11. Interacts with NELFB. Interacts with KAT8.

The protein resides in the nucleus. Essential component of the NELF complex, a complex that negatively regulates the elongation of transcription by RNA polymerase II. The NELF complex, which acts via an association with the DSIF complex and causes transcriptional pausing, is counteracted by the P-TEFb kinase complex. The chain is Negative elongation factor D (NELFCD) from Sus scrofa (Pig).